Reading from the N-terminus, the 948-residue chain is RNA polymerase-associated protein RapA (948 aa).

Residues Glu164–Asn332 enclose the Helicase ATP-binding domain. Asp177–Thr184 serves as a coordination point for ATP. The DEAH box motif lies at Asp278–His281. Residues Arg473–His627 enclose the Helicase C-terminal domain.

Belongs to the SNF2/RAD54 helicase family. RapA subfamily. As to quaternary structure, interacts with the RNAP. Has a higher affinity for the core RNAP than for the holoenzyme. Its ATPase activity is stimulated by binding to RNAP.

Its function is as follows. Transcription regulator that activates transcription by stimulating RNA polymerase (RNAP) recycling in case of stress conditions such as supercoiled DNA or high salt concentrations. Probably acts by releasing the RNAP, when it is trapped or immobilized on tightly supercoiled DNA. Does not activate transcription on linear DNA. Probably not involved in DNA repair. The chain is RNA polymerase-associated protein RapA from Pseudomonas putida (strain W619).